The chain runs to 1892 residues: MRSLWLLVFSFSVLTGTNMAFPMILSERPEVTGSFKVKDTSLTHLTVHRKTGEVFVGAINRVYKLSANLTETRSHQTGPVEDNAKCYPPPSVRACTQKLESTDNVNKLLLVDYAGNRLVACGSIWQGVCQFLRLEDLFKLGEPHHRKEHYLSGAKESDGMAGVVVGDDDGDLKKKKKGGSRLFIGAAIDGKSEYFPTLSSRKLVADEESVNMFSLVYQDEFVSSQIKIPSDTLSQYPAFDIYYVYGFSSRTYIYFLTLQLDTQLTQVDVTGEKFFTSKIVRMCSNDTEFYSYVEFPLGCTKDGVEYRLVQAAYKHRPGKILAQALGLSEDEDVLFVIFSQGQKNRANPPRETVLCLFTLHQINLAMRERIKSCYRGEGKLSLPWLLNKELPCINTPKQIGDDFCGLVLNQPLGGLMVIEGIPLFDDRTDGMASVAAYTYGDHSVVFVGTRSGHLKKIRVNGVPPPSENALLYETVTVVEGSPILRDMVFSPDYQYIYLLSDKQVSRLPVESCSQYSSCKTCLGSGDPHCGWCVLHNKCSRKEACEKWAEPLHFSTELKQCVDITVTPDNMSVTSVSTQLSVKVANVPNLSAGVTCVFEELTESPGEVLAEGQILCMSPSLRDVPSVTQGYGDKRVVKLSLKSKETGLKFITTDFVFYNCSVLQSCSSCVSSPFPCNWCKYRHICTNNVAECSFQEGRVSSAEGCPQILPSSDILVPAGIVRPITLRARNLPQPQSGQKNYECVFNIQGKVQRIPAVRFNSSCIQCQNTSYWYEGNEMGDLPVDFSIVWDGDFPIDKPSSMRALLYKCEAQRDSCGLCLKADSTFECGWCLADKKCLLKQHCPSAEHNWMHQGRRNIRCSHPRITKIRPLTGPKEGGTRVTIEGENLGLQVREITHVRVAGVRCNPAAAEYISAERIVCDMEESLMSSPPGGPVELCIGDCSAEYRTQSTQTYSFVMPSFSRVRPEKGPVSGGTRLTISGRHLDAGSAVTVFLAQEECLFVRRTVREIVCVTPPSASGSGPSSVKLFIDKAEITSDTRYIYTEDPNISTIEPNWSIINGSTSLTVTGTNLLTIQEPKVRAKYGGVETTNICSLVNDSVMTCLAPGIIYTKREAPESGVHPDEFGFILDHVSALLILNGTPFTYYPNPTFEPLGNAGILEVKPGSPIILKGKNLIPPAPGNIRLNYSVTIGETPCLLTVSESQLLCDSPDLTGEQRVMILVGGLEYSPGMLHIYSDSTLTLPAIIGIGAGGGVLLIAIIAVLIAYKRKTRDADRTLKRLQLQMDNLESRVALECKEAFAELQTDIQELTNDMDGVKIPFLEYRTYTMRVMFPGIEEHPVLKELDSPANVEKALRLFSQLLHNKMFLLTFIHTLEAQRSFSMRDRGNVASLLMAALQGRMEYATVVLKQLLADLIEKNLENRNHPKLLLRRTESVAEKMLTNWFTFLLHRFLKECAGEPLFMLYCAIKQQMEKGPIDAITGEARYSLSEDKLIRQQIDYKQLTLMCIPPEGEAGTEIPVKVLNCDTITQVKDKLLDAVYKGIPYSQRPQADDMDLEWRQGRLTRIILQDEDVTTKIESDWKRLNTLAHYQVTDGSLVALVQKQVSAYNIANSFTFTRSLSRYESLLRTSSSPDSLRSRAPMITPDQETGTKLWHLVKNHEHADQREGDRGSKMVSEIYLTRLLATKGTLQKFVDDLFETVFSTAHRGSALPLAIKYMFDFLDEQADKRQITDPDVRHTWKSNCLPLRFWVNVIKNPQFVFDIHKNSITDACLSVVAQTFMDSCSTSEHRLGKDSPSNKLLYAKDIPNYKSWVERYYRDISKMPSISDQDMDAYLVEQSRLHGNEFNTLSALSELYFYINKYKEEILTALDRDGYCRKHKLRHKLEQAINLMSGSS.

A signal peptide spans Met1 to Ala20. The Sema domain occupies Phe21–Val509. Topologically, residues Phe21–Pro1240 are extracellular. The N-linked (GlcNAc...) asparagine glycan is linked to Asn68. 9 disulfide bridges follow: Cys86/Cys95, Cys121/Cys129, Cys283/Cys404, Cys299/Cys355, Cys373/Cys392, Cys512/Cys529, Cys518/Cys560, Cys521/Cys538, and Cys532/Cys544. N-linked (GlcNAc...) asparagine glycosylation occurs at Asn569. Cys595 and Cys615 are joined by a disulfide. 4 IPT/TIG domains span residues Pro861–Val955, Pro957–Thr1041, Pro1044–Tyr1143, and Pro1146–Tyr1232. Asn1183 is a glycosylation site (N-linked (GlcNAc...) asparagine). The chain crosses the membrane as a helical span at residues Ala1241–Ile1261. A coiled-coil region spans residues Ala1262–Ile1315. Residues Ala1262–Ser1892 are Cytoplasmic-facing.

The protein belongs to the plexin family. Detected in primary motor neurons in the embryonic nervous system.

It localises to the cell membrane. Its function is as follows. Coreceptor for class 3 semaphorins. Necessary for signaling by class 3 semaphorins and subsequent remodeling of the cytoskeleton. Plays a role in axon guidance in the developing nervous system. Class 3 semaphorins bind to a complex composed of a neuropilin and a plexin. The plexin modulates the affinity of the complex for specific semaphorins, and its cytoplasmic domain is required for the activation of down-stream signaling events in the cytoplasm. The sequence is that of Plexin A3 (plxna3) from Danio rerio (Zebrafish).